A 393-amino-acid chain; its full sequence is Arginine biosynthesis bifunctional protein ArgJ (393 aa).

Substrate contacts are provided by T142, K168, T179, E265, N388, and T393. The active-site Nucleophile is T179.

It belongs to the ArgJ family. Heterotetramer of two alpha and two beta chains.

It is found in the cytoplasm. It carries out the reaction N(2)-acetyl-L-ornithine + L-glutamate = N-acetyl-L-glutamate + L-ornithine. The catalysed reaction is L-glutamate + acetyl-CoA = N-acetyl-L-glutamate + CoA + H(+). It participates in amino-acid biosynthesis; L-arginine biosynthesis; L-ornithine and N-acetyl-L-glutamate from L-glutamate and N(2)-acetyl-L-ornithine (cyclic): step 1/1. Its pathway is amino-acid biosynthesis; L-arginine biosynthesis; N(2)-acetyl-L-ornithine from L-glutamate: step 1/4. Its function is as follows. Catalyzes two activities which are involved in the cyclic version of arginine biosynthesis: the synthesis of N-acetylglutamate from glutamate and acetyl-CoA as the acetyl donor, and of ornithine by transacetylation between N(2)-acetylornithine and glutamate. The protein is Arginine biosynthesis bifunctional protein ArgJ of Geobacter sulfurreducens (strain ATCC 51573 / DSM 12127 / PCA).